Here is a 165-residue protein sequence, read N- to C-terminus: MASTYSFDVVSDFDHQELVNAIDQLKREISQRYDLKESNSEVELEEEKIIITTSSDMTLQAIEGVLLQKATKRKLSLKIFDFQPSETSSGNRVRQIVNLRKGLSQDMAKKLSKAVRDQLKKVTVSIQGDSLRVTGKSKDDLQSAIEIFRKKEEELDIPLQFENYR.

Belongs to the YajQ family.

Its function is as follows. Nucleotide-binding protein. The protein is Nucleotide-binding protein P9211_04811 of Prochlorococcus marinus (strain MIT 9211).